The chain runs to 101 residues: Movement protein (101 aa).

The chain crosses the membrane as a helical span at residues 30 to 50 (EVAILSFVALICFYLLYLWVL). A disordered region spans residues 75-101 (VDRSNPIPNIPAPPSQGNPGPFVPGTG).

The protein belongs to the mastrevirus movement protein family. Interacts with the capsid protein (CP). Part of a MP-CP-viral DNA complex.

The protein localises to the host membrane. Functionally, involved in the viral transport within, and between cells. This Maize streak virus genotype A (isolate Kenya) (MSV) protein is Movement protein.